The following is a 227-amino-acid chain: ATP synthase subunit a (227 aa).

A run of 5 helical transmembrane segments spans residues 16–36 (AFVYAFHFCLVALIILIVAYI), 79–99 (LVATIGFIVFFSNVIGIIPGF), 105–125 (SLNLTLVLALVVFIYYNFEGI), 176–196 (LFLLAMLTLAPWFAPLPAFAL), and 202–222 (VLQTFIFMMLTYVYLAGAVAI).

The protein belongs to the ATPase A chain family. In terms of assembly, F-type ATPases have 2 components, CF(1) - the catalytic core - and CF(0) - the membrane proton channel. CF(1) has five subunits: alpha(3), beta(3), gamma(1), delta(1), epsilon(1). CF(0) has three main subunits: a(1), b(2) and c(9-12). The alpha and beta chains form an alternating ring which encloses part of the gamma chain. CF(1) is attached to CF(0) by a central stalk formed by the gamma and epsilon chains, while a peripheral stalk is formed by the delta and b chains.

It is found in the cell inner membrane. In terms of biological role, key component of the proton channel; it plays a direct role in the translocation of protons across the membrane. The chain is ATP synthase subunit a from Campylobacter concisus (strain 13826).